Consider the following 420-residue polypeptide: Gamma-glutamyl phosphate reductase 2 (420 aa).

It belongs to the gamma-glutamyl phosphate reductase family.

Its subcellular location is the cytoplasm. It catalyses the reaction L-glutamate 5-semialdehyde + phosphate + NADP(+) = L-glutamyl 5-phosphate + NADPH + H(+). It functions in the pathway amino-acid biosynthesis; L-proline biosynthesis; L-glutamate 5-semialdehyde from L-glutamate: step 2/2. Its function is as follows. Catalyzes the NADPH-dependent reduction of L-glutamate 5-phosphate into L-glutamate 5-semialdehyde and phosphate. The product spontaneously undergoes cyclization to form 1-pyrroline-5-carboxylate. In Synechocystis sp. (strain ATCC 27184 / PCC 6803 / Kazusa), this protein is Gamma-glutamyl phosphate reductase 2.